Here is a 273-residue protein sequence, read N- to C-terminus: Flagellin FljM (273 aa).

Belongs to the bacterial flagellin family. In C.crescentus, the flagellar filament is composed of multiple flagellins of 29 kDa; 27 kDa and 25 kDa.

Its subcellular location is the secreted. It is found in the bacterial flagellum. Its function is as follows. Flagellin is the subunit protein which polymerizes to form the filaments of bacterial flagella. In Caulobacter vibrioides (strain ATCC 19089 / CIP 103742 / CB 15) (Caulobacter crescentus), this protein is Flagellin FljM (fljM).